The following is a 508-amino-acid chain: DASH complex subunit ASK1 (508 aa).

Disordered regions lie at residues 86 to 138 and 150 to 355; these read LVDG…TLSS and SRAA…QLRS. Residues 116–138 are compositionally biased toward polar residues; sequence EPSQYTPRPQTSAGGHDTTTLSS. Positions 161 to 175 are enriched in basic and acidic residues; sequence QHHDDSSVLTDRDGD. Acidic residues predominate over residues 201-213; that stretch reads DEMDIDMDEEDSE. Over residues 229–238 the composition is skewed to basic and acidic residues; it reads RYYDDDHGFE. Residues 239-258 are compositionally biased toward acidic residues; that stretch reads QGEEEEDEEEEEEEEEEEEG. A compositionally biased stretch (basic and acidic residues) spans 326–338; sequence IKQEDTEKKRPLW.

Belongs to the DASH complex ASK1 family. Component of the DASH complex consisting of ASK1, DAD1, DAD2, DAD3, DAD4, DAM1, DUO1, HSK3, SPC19 and SPC34, with a stoichiometry of one copy of each subunit per complex. Multiple DASH complexes oligomerize to form a ring that encircles spindle microtubules and organizes the rod-like NDC80 complexes of the outer kinetochore. On cytoplasmic microtubules, DASH complexes appear to form patches instead of rings.

Its subcellular location is the chromosome. The protein resides in the centromere. It is found in the kinetochore. The protein localises to the cytoplasm. It localises to the cytoskeleton. Its subcellular location is the spindle. The protein resides in the nucleus. Component of the DASH complex that connects microtubules with kinetochores and couples microtubule depolymerisation to chromosome movement; it is involved in retrieving kinetochores to the spindle poles before their re-orientation on the spindle in early mitosis and allows microtubule depolymerization to pull chromosomes apart and resist detachment during anaphase. Kinetochores, consisting of a centromere-associated inner segment and a microtubule-contacting outer segment, play a crucial role in chromosome segregation by mediating the physical connection between centromeric DNA and microtubules. Kinetochores also serve as an input point for the spindle assembly checkpoint, which delays anaphase until all chromosomes have bioriented on the mitotic spindle. The chain is DASH complex subunit ASK1 from Chaetomium thermophilum (strain DSM 1495 / CBS 144.50 / IMI 039719) (Thermochaetoides thermophila).